The primary structure comprises 128 residues: Protein BEX1 (128 aa).

The interval 1–55 is disordered; sequence MESKDQGAKNLNMENDHQKKEEKEEKPQDTIKREPVVAPTFEAGKNCAPRGGRRR. Residues 14–35 are compositionally biased toward basic and acidic residues; sequence ENDHQKKEEKEEKPQDTIKREP. Ser-105 is modified (phosphoserine; by PKB/AKT1). The tract at residues 107-128 is disordered; it reads SLRAVSTDPPHHDHHDEFCLMP. Basic and acidic residues predominate over residues 115 to 128; that stretch reads PPHHDHHDEFCLMP. The his cluster stretch occupies residues 117 to 121; it reads HHDHH. Zn(2+) is bound at residue Cys-125.

Belongs to the BEX family. In terms of assembly, interacts with neurotrophin receptor p75NTR/NGFR. Interacts with OMP. Post-translationally, phosphorylated. Phosphorylation of Ser-105 protects it from the proteasome. In terms of processing, ubiquitinated. Degraded by the proteasome. In terms of tissue distribution, expressed in the central nervous system. Expressed in Schwann cells from newborn sciatic nerve.

Its subcellular location is the nucleus. It localises to the cytoplasm. In terms of biological role, signaling adapter molecule involved in p75NTR/NGFR signaling. Plays a role in cell cycle progression and neuronal differentiation. Inhibits neuronal differentiation in response to nerve growth factor (NGF). May act as a link between the cell cycle and neurotrophic factor signaling, possibly by functioning as an upstream modulator of receptor signaling, coordinating biological responses to external signals with internal cellular states. In absence of reductive stress, acts as a pseudosubstrate for the CRL2(FEM1B) complex: associates with FEM1B via zinc, thereby preventing association between FEM1B and its substrates. In Rattus norvegicus (Rat), this protein is Protein BEX1 (Bex1).